We begin with the raw amino-acid sequence, 65 residues long: MRCLSIFVLLVLLVSFAVAELDVEGEIVKQLLTRGTLKDADFWKRLEMQGCVCNANAKFCCGEGR.

Positions M1–A19 are cleaved as a signal peptide. A propeptide spanning residues E20–M48 is cleaved from the precursor. Residue Q49 is modified to Pyrrolidone carboxylic acid. 2 disulfide bridges follow: C51–C60 and C53–C61. Position 63 is a glutamic acid 1-amide (E63).

In terms of tissue distribution, expressed by the venom duct.

The protein localises to the secreted. In terms of biological role, probable neurotoxin with unknown target. Possibly targets ion channels. This is Conotoxin Cal16.1 from Californiconus californicus (California cone).